The sequence spans 367 residues: Cycloaraneosene synthase sdnA (367 aa).

Residues 1 to 24 (MSLYGLFTLATSYLPSVGGGAALA) form the signal peptide. 3 residues coordinate Mg(2+): aspartate 115, asparagine 260, and serine 264. The DDXXD motif motif lies at 115–119 (DDQFD). Asparagine 276 carries an N-linked (GlcNAc...) asparagine glycan.

It belongs to the terpene synthase family. The cofactor is Mg(2+).

It catalyses the reaction (2E,6E,10E)-geranylgeranyl diphosphate = cycloaraneosene + diphosphate. The protein operates within antibiotic biosynthesis. In terms of biological role, cycloaraneosene synthase; part of the gene cluster that mediates the biosynthesis of sordarin and hypoxysordarin, glycoside antibiotics with a unique tetracyclic diterpene aglycone structure. First, the geranylgeranyl diphosphate synthase sdnC constructs GGDP from farnesyl diphosphate and isopentenyl diphosphate. The diterpene cyclase sdnA then catalyzes the cyclization of GGDP to afford cycloaraneosene. Cycloaraneosene is then hydroxylated four times by the putative cytochrome P450 monooxygenases sdnB, sdnE, sdnF and sdnH to give a hydroxylated cycloaraneosene derivative such as cycloaraneosene-8,9,13,19-tetraol. Although the order of the hydroxylations is unclear, at least C8, C9 and C13 of the cycloaraneosene skeleton are hydroxylated before the sordaricin formation. Dehydration of the 13-hydroxy group of the hydroxylated cycloaraneosene derivative might be catalyzed by an unassigned hypothetical protein such as sdnG and sdnP to construct the cyclopentadiene moiety. The FAD-dependent oxidoreductase sdnN is proposed to catalyze the oxidation at C9 of the hydroxylated cycloaraneosene derivative and also catalyze the Baeyer-Villiger oxidation to give the lactone intermediate. The presumed lactone intermediate would be hydrolyzed to give an acrolein moiety and a carboxylate moiety. Then, [4+2]cycloaddition would occur between the acrolein moiety and the cyclopentadiene moiety to give sordaricin. SdnN might also be involved in the [4+2]cycloaddition after the hypothesized oxidation to accommodate the oxidized product and prompt the [4+2]cycloaddition. GDP-6-deoxy-D-altrose may be biosynthesized from GDP-D-mannose by the putative GDP-mannose-4,6-dehydratase sdnI and the short-chain dehydrogenase sdnK. The glycosyltransferase sdnJ catalyzes the attachment of 6-deoxy-D-altrose onto the 19-hydroxy group of sordaricin to give 4'-O-demethylsordarin. The methyltransferase sdnD would complete the biosynthesis of sordarin. Sordarin can be further modified into hypoxysordarin. The unique acyl chain at the 3'-hydroxy group of hypoxysordarin would be constructed by an iterative type I PKS sdnO and the trans-acting polyketide methyltransferase sdnL. SdnL would be responsible for the introduction of an alpha-methyl group of the polyketide chain. Alternatively, the beta-lactamase-like protein sdnR might be responsible for the cleavage and transfer of the polyketide chain from the PKS sdnO to sordarin. Two putative cytochrome P450 monooxygenases, sdnQ and sdnT, might catalyze the epoxidations of the polyketide chain to complete the biosynthesis of hypoxysordarin. Transcriptional regulators sdnM and sdnS are presumably encoded for the transcriptional regulation of the expression of the sdn gene cluster. This chain is Cycloaraneosene synthase sdnA, found in Sordaria araneosa (Pleurage araneosa).